The following is a 293-amino-acid chain: Bifunctional protein FolD (293 aa).

Residues 165 to 167, Ser190, and Ile231 contribute to the NADP(+) site; that span reads GRS.

Belongs to the tetrahydrofolate dehydrogenase/cyclohydrolase family. As to quaternary structure, homodimer.

It carries out the reaction (6R)-5,10-methylene-5,6,7,8-tetrahydrofolate + NADP(+) = (6R)-5,10-methenyltetrahydrofolate + NADPH. The enzyme catalyses (6R)-5,10-methenyltetrahydrofolate + H2O = (6R)-10-formyltetrahydrofolate + H(+). The protein operates within one-carbon metabolism; tetrahydrofolate interconversion. Functionally, catalyzes the oxidation of 5,10-methylenetetrahydrofolate to 5,10-methenyltetrahydrofolate and then the hydrolysis of 5,10-methenyltetrahydrofolate to 10-formyltetrahydrofolate. This chain is Bifunctional protein FolD, found in Synechococcus sp. (strain CC9902).